Here is a 547-residue protein sequence, read N- to C-terminus: Putative laccase-5 (547 aa).

The first 35 residues, 1-35, serve as a signal peptide directing secretion; that stretch reads MGTPRGLRNAGSSSSACRFLAAFAVLLALPTLTAG. Plastocyanin-like domains are found at residues 43–159 and 170–323; these read NVQM…PKRG and ELPP…YAPT. N48 and N89 each carry an N-linked (GlcNAc...) asparagine glycan. 4 residues coordinate Cu cation: H93, H95, H138, and H140. N-linked (GlcNAc...) asparagine glycans are attached at residues N199, N215, N251, N311, N342, N349, N388, N395, N405, and N430. The 124-residue stretch at 408–531 folds into the Plastocyanin-like 3 domain; the sequence is FVRPRVALLE…SMAWLVNDGP (124 aa). Residues H448, H451, H453, H510, C511, H512, and H516 each contribute to the Cu cation site.

Belongs to the multicopper oxidase family. Requires Cu cation as cofactor.

It localises to the secreted. Its subcellular location is the extracellular space. It is found in the apoplast. It catalyses the reaction 4 hydroquinone + O2 = 4 benzosemiquinone + 2 H2O. Functionally, lignin degradation and detoxification of lignin-derived products. In Oryza sativa subsp. japonica (Rice), this protein is Putative laccase-5 (LAC5).